The primary structure comprises 876 residues: Alanine--tRNA ligase (876 aa).

4 residues coordinate Zn(2+): His564, His568, Cys666, and His670.

The protein belongs to the class-II aminoacyl-tRNA synthetase family. It depends on Zn(2+) as a cofactor.

It is found in the cytoplasm. The catalysed reaction is tRNA(Ala) + L-alanine + ATP = L-alanyl-tRNA(Ala) + AMP + diphosphate. Its function is as follows. Catalyzes the attachment of alanine to tRNA(Ala) in a two-step reaction: alanine is first activated by ATP to form Ala-AMP and then transferred to the acceptor end of tRNA(Ala). Also edits incorrectly charged Ser-tRNA(Ala) and Gly-tRNA(Ala) via its editing domain. This is Alanine--tRNA ligase from Porphyromonas gingivalis (strain ATCC BAA-308 / W83).